Consider the following 939-residue polypeptide: Nonsense-mediated mRNA decay factor SMG8 (939 aa).

Disordered regions lie at residues 561 to 600 (KICT…QLSP) and 617 to 645 (LNES…ADTE). Acidic residues predominate over residues 567-587 (GEDENEDGETEEADEDTEEKE). The segment covering 617 to 629 (LNESQESSEQLSG) has biased composition (low complexity).

Belongs to the SMG8 family.

Functionally, involved in nonsense-mediated decay (NMD) of mRNAs containing premature stop codons. Probable component of kinase complex containing nonC and recruited to stalled ribosomes. This chain is Nonsense-mediated mRNA decay factor SMG8, found in Drosophila ananassae (Fruit fly).